Consider the following 692-residue polypeptide: Elongation factor G (692 aa).

The region spanning 8 to 283 (NRIRNIGIAA…AVIDYLPAPT (276 aa)) is the tr-type G domain. Residues 17 to 24 (AHIDAGKT), 81 to 85 (DTPGH), and 135 to 138 (NKMD) each bind GTP.

The protein belongs to the TRAFAC class translation factor GTPase superfamily. Classic translation factor GTPase family. EF-G/EF-2 subfamily.

The protein resides in the cytoplasm. Its function is as follows. Catalyzes the GTP-dependent ribosomal translocation step during translation elongation. During this step, the ribosome changes from the pre-translocational (PRE) to the post-translocational (POST) state as the newly formed A-site-bound peptidyl-tRNA and P-site-bound deacylated tRNA move to the P and E sites, respectively. Catalyzes the coordinated movement of the two tRNA molecules, the mRNA and conformational changes in the ribosome. The sequence is that of Elongation factor G from Helicobacter pylori (strain G27).